A 1040-amino-acid polypeptide reads, in one-letter code: Multidrug resistance protein MdtB (1040 aa).

Helical transmembrane passes span 25-45, 347-367, 369-389, 396-416, 440-460, 472-492, 537-557, 863-883, 888-908, 910-930, 968-988, and 998-1018; these read LLMA…PVAA, LMLA…NIPA, IIPG…MVFL, LTLM…IVVI, IGFT…PLLF, FAVT…TLTP, WLTL…WIVI, LGST…VLGV, FIHP…ALLA, IIAG…LIGI, ILMT…STGV, and IAMV…TPVI.

The protein belongs to the resistance-nodulation-cell division (RND) (TC 2.A.6) family. MdtB subfamily. As to quaternary structure, part of a tripartite efflux system composed of MdtA, MdtB and MdtC. MdtB forms a heteromultimer with MdtC.

Its subcellular location is the cell inner membrane. The sequence is that of Multidrug resistance protein MdtB from Salmonella paratyphi A (strain ATCC 9150 / SARB42).